Here is a 244-residue protein sequence, read N- to C-terminus: tRNA1(Val) (adenine(37)-N6)-methyltransferase (244 aa).

Belongs to the methyltransferase superfamily. tRNA (adenine-N(6)-)-methyltransferase family.

Its subcellular location is the cytoplasm. The catalysed reaction is adenosine(37) in tRNA1(Val) + S-adenosyl-L-methionine = N(6)-methyladenosine(37) in tRNA1(Val) + S-adenosyl-L-homocysteine + H(+). Its function is as follows. Specifically methylates the adenine in position 37 of tRNA(1)(Val) (anticodon cmo5UAC). The chain is tRNA1(Val) (adenine(37)-N6)-methyltransferase from Shewanella sediminis (strain HAW-EB3).